The sequence spans 157 residues: Large ribosomal subunit protein uL15 (157 aa).

The tract at residues 1 to 41 is disordered; that stretch reads MKLHELSDNPGATKKRKRVGRGPGSGTGKMGGRGIKGQKSR. Over residues 21-35 the composition is skewed to gly residues; it reads RGPGSGTGKMGGRGI.

It belongs to the universal ribosomal protein uL15 family. In terms of assembly, part of the 50S ribosomal subunit.

Binds to the 23S rRNA. This is Large ribosomal subunit protein uL15 from Jannaschia sp. (strain CCS1).